Reading from the N-terminus, the 2176-residue chain is Protein eyes shut (2176 aa).

At 1 to 122 (MSNVHQFDTQ…NPNILLPTLR (122 aa)) the chain is on the cytoplasmic side. A helical membrane pass occupies residues 123-143 (ILARGLLLPALILAILVGSSQ). In terms of domain architecture, EGF-like 1 spans 144–180 (AGFACLSNPCVFGVCIDGLNSSYSCYCIDGYTGIQCQ). Residues 144–2176 (AGFACLSNPC…DLHGDEPLTV (2033 aa)) are Extracellular-facing. Disulfide bonds link Cys148–Cys158, Cys153–Cys168, Cys170–Cys179, Cys186–Cys197, Cys191–Cys206, Cys208–Cys217, Cys224–Cys235, Cys229–Cys244, Cys246–Cys255, Cys262–Cys276, Cys270–Cys286, Cys288–Cys297, Cys304–Cys315, Cys309–Cys324, Cys326–Cys335, Cys342–Cys353, Cys347–Cys362, Cys364–Cys373, Cys380–Cys392, Cys386–Cys401, and Cys403–Cys412. Asn163 carries N-linked (GlcNAc...) asparagine glycosylation. The EGF-like 2; calcium-binding domain occupies 182 to 218 (NWDECWSSPCQNGGTCVDGVAYYNCTCPEGFSGSNCE). Asn205 carries N-linked (GlcNAc...) asparagine glycosylation. Residues 220–256 (NVDECMSNPCQNGGLCRDRTNGYICTCQPGYLGSHCE) enclose the EGF-like 3; calcium-binding domain. The 41-residue stretch at 258–298 (DVAVCETGTGARCQHGGECIEGPGLEFTCDCPAGWHGRICQ) folds into the EGF-like 4 domain. An EGF-like 5; calcium-binding domain is found at 300–336 (EINECASSPCQNGGVCVDKLAAYACACPMGYTGINCE). In terms of domain architecture, EGF-like 6 spans 338-374 (EILICADNPCQNNALCLMEEGVPTCYCVPDYHGEKCE). Residues 376-413 (QYDECQLGPRCMNGGVCIDGVDTFSCSCPPLLTGMLCE) enclose the EGF-like 7; calcium-binding domain. N-linked (GlcNAc...) asparagine glycosylation occurs at Asn425. 2 stretches are compositionally biased toward low complexity: residues 429 to 447 (PATQ…MAPP) and 482 to 502 (VTSV…VSVE). 5 disordered regions span residues 429–465 (PATQ…SRAS), 482–639 (VTSV…RPTA), 757–783 (RFTT…LPTP), 802–854 (LITT…VEIT), and 902–1014 (APPA…GVPE). A compositionally biased stretch (polar residues) spans 514 to 526 (GSHSISVEQTTAV). The span at 548–560 (SASESETETEEEI) shows a compositional bias: acidic residues. Composition is skewed to low complexity over residues 564–582 (TTAR…ESPS) and 596–632 (TSAS…SEEV). Positions 757-775 (RFTTVQPPAGVTTTSPTED) are enriched in polar residues. Basic residues predominate over residues 811-820 (THHHHHHHPH). 2 stretches are compositionally biased toward pro residues: residues 904-922 (PATP…PSPP) and 930-955 (TLPP…PTPP). One can recognise an EGF-like 8 domain in the interval 1018–1054 (GDVDCIKLGCYNGGTCVTTSEGSRCVCRFDRQGPLCE). Disulfide bonds link Cys1022-Cys1033, Cys1027-Cys1042, and Cys1044-Cys1053. A Laminin G-like 1 domain is found at 1059–1266 (IRNAAFSGDS…GITECGSLAC (208 aa)). N-linked (GlcNAc...) asparagine glycosylation is found at Asn1165, Asn1170, and Asn1176. One can recognise an EGF-like 9 domain in the interval 1309 to 1346 (EISVCEDNPCQYGGTCVQFPGSGYLCLCPLGKHGHYCE). 3 disulfides stabilise this stretch: Cys1313–Cys1324, Cys1318–Cys1334, and Cys1336–Cys1345. The Laminin G-like 2 domain occupies 1353–1549 (LPSFSGSVNG…GVGQCGTREC (197 aa)). Asn1471 is a glycosylation site (N-linked (GlcNAc...) asparagine). EGF-like domains lie at 1545 to 1581 (GTRE…PLCA) and 1583 to 1621 (PTNP…KNCE). 6 disulfides stabilise this stretch: Cys1549–Cys1560, Cys1554–Cys1569, Cys1571–Cys1580, Cys1587–Cys1600, Cys1594–Cys1609, and Cys1611–Cys1620. N-linked (GlcNAc...) asparagine glycans are attached at residues Asn1665 and Asn1861. The 188-residue stretch at 1692–1879 (EKQRSFSPVP…NIRDCDGTAC (188 aa)) folds into the Laminin G-like 3 domain. EGF-like domains follow at residues 1875 to 1912 (DGTA…DRCE) and 1913 to 1946 (YSET…FYCE). Intrachain disulfides connect Cys1879–Cys1890, Cys1884–Cys1900, Cys1902–Cys1911, Cys1917–Cys1928, Cys1922–Cys1934, and Cys1936–Cys1945. The region spanning 1952–2166 (PTTPSFRGNS…TYQGENIGSC (215 aa)) is the Laminin G-like 4 domain. 3 N-linked (GlcNAc...) asparagine glycosylation sites follow: Asn1994, Asn2035, and Asn2099. Residues 2080 to 2101 (GGRSLGSTTPRSTLAGRRKNSS) form a disordered region.

The protein belongs to the EYS family. In terms of tissue distribution, expressed from the beginning of rhabdomere biogenesis (48 hours after pupal formation), when it decorates the entire photoreceptor apical surface.

It is found in the membrane. It localises to the secreted. In terms of biological role, essential for the formation of matrix-filled interrhabdomeral space: critical for the formation of epithelial lumina in the retina. Acts together with prominin (prom) and the cell adhesion molecule chaoptin (chp) to choreograph the partitioning of rhabdomeres into an open system. The sequence is that of Protein eyes shut from Drosophila melanogaster (Fruit fly).